The chain runs to 333 residues: Complement C1q and tumor necrosis factor-related protein 9B (333 aa).

An N-terminal signal peptide occupies residues 1 to 19; sequence MRIWWLLLAIEICTGNINS. Collagen-like domains are found at residues 24–82, 95–154, and 155–191; these read RQGH…DGKV, GSPG…PGPM, and GPIG…GEKG. Positions 24 to 189 are disordered; that stretch reads RQGHPGIPGN…IRGWKGDRGE (166 aa). Residues 26 to 40 are compositionally biased toward low complexity; it reads GHPGIPGNPGHNGLP. 2 stretches are compositionally biased toward basic and acidic residues: residues 42-55 and 69-88; these read RDGR…KGDA and TSGE…KGIK. The C1q domain occupies 197 to 333; that stretch reads LVLPKSAFTV…FTGFLLFSSQ (137 aa).

In terms of assembly, interacts with CTRP9A and ADIPOQ. Forms heterotrimers and heterooligomeric complexes with CTRP9A. As to expression, expressed at low levels. Not expressed in adipose tissues.

Its subcellular location is the secreted. Functionally, probable adipokine. Activates AMPK, AKT, and p44/42 MAPK signaling pathways. This chain is Complement C1q and tumor necrosis factor-related protein 9B (C1QTNF9B), found in Homo sapiens (Human).